A 484-amino-acid polypeptide reads, in one-letter code: Glycogen synthase (484 aa).

K15 lines the ADP-alpha-D-glucose pocket.

Belongs to the glycosyltransferase 1 family. Bacterial/plant glycogen synthase subfamily.

The catalysed reaction is [(1-&gt;4)-alpha-D-glucosyl](n) + ADP-alpha-D-glucose = [(1-&gt;4)-alpha-D-glucosyl](n+1) + ADP + H(+). It participates in glycan biosynthesis; glycogen biosynthesis. Functionally, synthesizes alpha-1,4-glucan chains using ADP-glucose. The polypeptide is Glycogen synthase (Syntrophotalea carbinolica (strain DSM 2380 / NBRC 103641 / GraBd1) (Pelobacter carbinolicus)).